We begin with the raw amino-acid sequence, 209 residues long: MASINKLALLSRTLSSAAAQATVKPPVQVFGLEGRYATALYSAASKLSQLDQVEKDLTALQATIRSDKKLREYVTSPIINKKVMATALKEASEKLRFAPATVNLLGLLADNGRLKKLDTVINAYKTIMAAHRGEVVCEVVTAKPLDASQSKQLEGALKSFLKGNESLKITSRVDPSIIGGLIVSIGDKYVDMSIATKVKLYTDVIQTAA.

Belongs to the ATPase delta chain family. As to quaternary structure, F-type ATPases have 2 components, CF(1) - the catalytic core - and CF(0) - the membrane proton channel. CF(1) has five subunits: alpha(3), beta(3), gamma(1), delta(1), epsilon(1). CF(0) has three main subunits: a, b and c.

It is found in the mitochondrion. It localises to the mitochondrion inner membrane. Mitochondrial membrane ATP synthase (F(1)F(0) ATP synthase or Complex V) produces ATP from ADP in the presence of a proton gradient across the membrane which is generated by electron transport complexes of the respiratory chain. F-type ATPases consist of two structural domains, F(1) - containing the extramembraneous catalytic core and F(0) - containing the membrane proton channel, linked together by a central stalk and a peripheral stalk. During catalysis, ATP synthesis in the catalytic domain of F(1) is coupled via a rotary mechanism of the central stalk subunits to proton translocation. Part of the complex F(0) domain and the peripheric stalk, which acts as a stator to hold the catalytic alpha(3)beta(3) subcomplex and subunit a/ATP6 static relative to the rotary elements. This is ATP synthase subunit O, mitochondrial from Drosophila melanogaster (Fruit fly).